The primary structure comprises 217 residues: Large ribosomal subunit protein uL4 (217 aa).

The interval 58-90 (TAATKGRSDVSGGGKKPWRQKGTGRARSGTSRS) is disordered.

Belongs to the universal ribosomal protein uL4 family. Part of the 50S ribosomal subunit.

Functionally, one of the primary rRNA binding proteins, this protein initially binds near the 5'-end of the 23S rRNA. It is important during the early stages of 50S assembly. It makes multiple contacts with different domains of the 23S rRNA in the assembled 50S subunit and ribosome. In terms of biological role, forms part of the polypeptide exit tunnel. The protein is Large ribosomal subunit protein uL4 of Syntrophus aciditrophicus (strain SB).